The sequence spans 402 residues: Centromere protein C (402 aa).

A Glycyl lysine isopeptide (Lys-Gly) (interchain with G-Cter in SUMO2) cross-link involves residue K1. A compositionally biased stretch (low complexity) spans K1 to S12. The segment at K1–T118 is disordered. S5 is modified (phosphoserine). The Nuclear localization signal signature appears at Q25–K42. The segment covering A44–N53 has biased composition (basic residues). Over residues P88–T118 the composition is skewed to polar residues. A Glycyl lysine isopeptide (Lys-Gly) (interchain with G-Cter in SUMO2) cross-link involves residue K186. T193 carries the post-translational modification Phosphothreonine. Residues V196–Q218 form an MIF2 homology domain II region. Residues S222 and S232 each carry the phosphoserine modification. The Nuclear localization signal motif lies at K239 to R257. A Glycyl lysine isopeptide (Lys-Gly) (interchain with G-Cter in SUMO2) cross-link involves residue K266. Positions L349 to S402 are MIF2 homology domain III.

Belongs to the CENP-C/MIF2 family. Oligomer. Component of the CENPA-NAC complex, at least composed of CENPA, CENPC, CENPH, CENPM, CENPN, CENPT and CENPU. The CENPA-NAC complex interacts with the CENPA-CAD complex, composed of CENPI, CENPK, CENPL, CENPO, CENPP, CENPQ, CENPR and CENPS. Binds to DAXX. Interacts with DNMT3B. Interacts directly with CENPA. Identified in a centromere complex containing histones H2A, H2B and H4, and at least CENPA, CENPB, CENPC, CENPT, CENPN, HJURP, SUPT16H, SSRP1 and RSF1. Interacts with MEIKIN.

The protein localises to the nucleus. The protein resides in the chromosome. It is found in the centromere. It localises to the kinetochore. Its function is as follows. Component of the CENPA-NAC (nucleosome-associated) complex, a complex that plays a central role in assembly of kinetochore proteins, mitotic progression and chromosome segregation. The CENPA-NAC complex recruits the CENPA-CAD (nucleosome distal) complex and may be involved in incorporation of newly synthesized CENPA into centromeres. CENPC recruits DNA methylation and DNMT3B to both centromeric and pericentromeric satellite repeats and regulates the histone code in these regions. The chain is Centromere protein C (CENPC) from Ovis aries (Sheep).